Here is a 128-residue protein sequence, read N- to C-terminus: SH2 domain-containing protein 1A (128 aa).

Residues 6–102 (VYHGKISRET…GIVIPLQYPV (97 aa)) form the SH2 domain. The tract at residues 67-92 (DTAPGVHKRFFRKIKNLISAFQKPDQ) is interaction with FYN SH3 domain. Lys-89 bears the N6-acetyllysine mark. Residues 103–128 (EKKSSARSTQGATGRREDPDVFLKTP) are disordered. A compositionally biased stretch (basic and acidic residues) spans 116–128 (GRREDPDVFLKTP).

In terms of assembly, interacts with CD84, CD244, LY9, SLAMF1 and FYN. Interacts with NTRK1, NTRK2 and NTRK3.

It is found in the cytoplasm. Its function is as follows. Cytoplasmic adapter regulating receptors of the signaling lymphocytic activation molecule (SLAM) family such as SLAMF1, CD244, LY9, CD84, SLAMF6 and SLAMF7. In SLAM signaling seems to cooperate with SH2D1B/EAT-2. Initially it has been proposed that association with SLAMF1 prevents SLAMF1 binding to inhibitory effectors including INPP5D/SHIP1 and PTPN11/SHP-2. However, by simultaneous interactions, recruits FYN which subsequently phosphorylates and activates SLAMF1. Positively regulates CD244/2B4- and CD84-mediated natural killer (NK) cell functions. Can also promote CD48-, SLAMF6 -, LY9-, and SLAMF7-mediated NK cell activation. In the context of NK cell-mediated cytotoxicity enhances conjugate formation with target cells. May also regulate the activity of the neurotrophin receptors NTRK1, NTRK2 and NTRK3. The sequence is that of SH2 domain-containing protein 1A (SH2D1A) from Sus scrofa (Pig).